The sequence spans 212 residues: Imidazole glycerol phosphate synthase subunit HisH (212 aa).

The region spanning 2–212 is the Glutamine amidotransferase type-1 domain; that stretch reads LTAIIDYESG…MIGNFLTWTP (211 aa). Cys-87 functions as the Nucleophile in the catalytic mechanism. Residues His-192 and Glu-194 contribute to the active site.

Heterodimer of HisH and HisF.

Its subcellular location is the cytoplasm. It carries out the reaction 5-[(5-phospho-1-deoxy-D-ribulos-1-ylimino)methylamino]-1-(5-phospho-beta-D-ribosyl)imidazole-4-carboxamide + L-glutamine = D-erythro-1-(imidazol-4-yl)glycerol 3-phosphate + 5-amino-1-(5-phospho-beta-D-ribosyl)imidazole-4-carboxamide + L-glutamate + H(+). The catalysed reaction is L-glutamine + H2O = L-glutamate + NH4(+). It participates in amino-acid biosynthesis; L-histidine biosynthesis; L-histidine from 5-phospho-alpha-D-ribose 1-diphosphate: step 5/9. Its function is as follows. IGPS catalyzes the conversion of PRFAR and glutamine to IGP, AICAR and glutamate. The HisH subunit catalyzes the hydrolysis of glutamine to glutamate and ammonia as part of the synthesis of IGP and AICAR. The resulting ammonia molecule is channeled to the active site of HisF. The polypeptide is Imidazole glycerol phosphate synthase subunit HisH (Ruegeria pomeroyi (strain ATCC 700808 / DSM 15171 / DSS-3) (Silicibacter pomeroyi)).